Here is a 269-residue protein sequence, read N- to C-terminus: Enoyl-[acyl-carrier-protein] reductase [NADH] (269 aa).

NAD(+)-binding positions include 20–21, 64–65, and 95–96; these read SI, DV, and IG. Tyr-158 is a substrate binding site. NAD(+) contacts are provided by Lys-165 and Ile-194. Thr-266 carries the phosphothreonine modification.

Belongs to the short-chain dehydrogenases/reductases (SDR) family. FabI subfamily. As to quaternary structure, homodimer. Homotetramer. Post-translationally, is phosphorylated in vivo. Phosphorylation on Thr-266 decreases enzymatic activity.

It localises to the secreted. Its subcellular location is the cell wall. It carries out the reaction a 2,3-saturated acyl-[ACP] + NAD(+) = a (2E)-enoyl-[ACP] + NADH + H(+). It catalyses the reaction a 2,3-saturated acyl-CoA + NAD(+) = a (2E)-enoyl-CoA + NADH + H(+). The enzyme catalyses (2E)-octenoyl-CoA + NADH + H(+) = octanoyl-CoA + NAD(+). The catalysed reaction is (2E)-dodecenoyl-CoA + NADH + H(+) = dodecanoyl-CoA + NAD(+). It participates in lipid metabolism; mycolic acid biosynthesis. With respect to regulation, inhA activity is controlled via phosphorylation: phosphorylation on Thr-266 decreases InhA activity and likely negatively regulates biosynthesis of mycolic acids and growth of the bacterium. InhA activity is likely inhibited by activated isoniazid, hexadecynoyl-CoA and octadecynoyl-CoA, which also block the biosynthesis of mycolic acids. The antitubercular pro-drug isoniazid (INH) is oxidatively activated by the catalase-peroxidase KatG and then covalently binds NAD to form an adduct that inhibits the activity of InhA. The inhibitory adduct is the isonicotinic-acyl-NADH where the isonicotinic-acyl group replaces the 4S (and not the 4R) hydrogen of NADH. Similarly, the antitubercular pro-drugs ethionamide (ETH) and prothionamide (PTH) are activated by the flavoprotein monooxygenase EthA, and forms an adduct with NAD (ETH-NAD and PTH-NAD, respectively) that is a tight-binding inhibitor of InhA. Enoyl-ACP reductase of the type II fatty acid syntase (FAS-II) system, which is involved in the biosynthesis of mycolic acids, a major component of mycobacterial cell walls. Catalyzes the NADH-dependent reduction of the double bond of 2-trans-enoyl-[acyl-carrier protein], an essential step in the fatty acid elongation cycle of the FAS-II pathway. Shows preference for long-chain fatty acyl thioester substrates (&gt;C16), and can also use 2-trans-enoyl-CoAs as alternative substrates. The mycobacterial FAS-II system utilizes the products of the FAS-I system as primers to extend fatty acyl chain lengths up to C56, forming the meromycolate chain that serves as the precursor for final mycolic acids. Its function is as follows. Is the primary target of the first-line antitubercular drug isoniazid (INH) and of the second-line drug ethionamide (ETH). Overexpressed inhA confers INH and ETH resistance to M.smegmatis. The mechanism of isoniazid action against InhA is covalent attachment of the activated form of the drug to the nicotinamide ring of NAD and binding of the INH-NAD adduct to the active site of InhA. Similarly, the ETH-NAD adduct binds InhA. In Mycolicibacterium smegmatis (strain ATCC 700084 / mc(2)155) (Mycobacterium smegmatis), this protein is Enoyl-[acyl-carrier-protein] reductase [NADH].